The following is a 220-amino-acid chain: Deoxyribose-phosphate aldolase (220 aa).

Residue aspartate 89 is the Proton donor/acceptor of the active site. Lysine 152 acts as the Schiff-base intermediate with acetaldehyde in catalysis. The Proton donor/acceptor role is filled by lysine 181.

The protein belongs to the DeoC/FbaB aldolase family. DeoC type 1 subfamily.

It is found in the cytoplasm. The enzyme catalyses 2-deoxy-D-ribose 5-phosphate = D-glyceraldehyde 3-phosphate + acetaldehyde. The protein operates within carbohydrate degradation; 2-deoxy-D-ribose 1-phosphate degradation; D-glyceraldehyde 3-phosphate and acetaldehyde from 2-deoxy-alpha-D-ribose 1-phosphate: step 2/2. Its function is as follows. Catalyzes a reversible aldol reaction between acetaldehyde and D-glyceraldehyde 3-phosphate to generate 2-deoxy-D-ribose 5-phosphate. This chain is Deoxyribose-phosphate aldolase, found in Enterococcus faecalis (strain ATCC 700802 / V583).